Reading from the N-terminus, the 145-residue chain is Endoribonuclease YbeY (145 aa).

Positions 109, 113, and 119 each coordinate Zn(2+).

It belongs to the endoribonuclease YbeY family. It depends on Zn(2+) as a cofactor.

Its subcellular location is the cytoplasm. Functionally, single strand-specific metallo-endoribonuclease involved in late-stage 70S ribosome quality control and in maturation of the 3' terminus of the 16S rRNA. This Vesicomyosocius okutanii subsp. Calyptogena okutanii (strain HA) protein is Endoribonuclease YbeY.